The primary structure comprises 97 residues: MDPKTSVVLPALHLVDPQIQLTTTRMEDAVVHGQNNADLKVYPIILRLGSQLSLSMVRRNLDSLEVRVFQSTPIVVKMTKLATTEELPDEFVVVTAK.

A 9b domain is found at valine 8–lysine 97.

Belongs to the coronavirus group 2 protein 9b family. In terms of assembly, homodimer.

The protein resides in the host cytoplasmic vesicle membrane. Its subcellular location is the host cytoplasm. This Rhinolophus ferrumequinum (Greater horseshoe bat) protein is Protein 9b.